The sequence spans 425 residues: Polyadenylate-binding protein RBP47B' (425 aa).

3 consecutive RRM domains span residues 24-102 (RTLW…LNWA), 116-195 (HSIF…AATP), and 237-309 (TTIS…WSKN).

The protein belongs to the polyadenylate-binding RBP47 family. As to quaternary structure, interacts with the poly(A) tail of mRNA in nucleus.

It is found in the nucleus. It localises to the cytoplasmic granule. In terms of biological role, heterogeneous nuclear ribonucleoprotein (hnRNP)-protein binding the poly(A) tail of mRNA and probably involved in some steps of pre-mRNA maturation. The chain is Polyadenylate-binding protein RBP47B' (RBP47B') from Arabidopsis thaliana (Mouse-ear cress).